Reading from the N-terminus, the 363-residue chain is Histidinol-phosphate aminotransferase (363 aa).

Lysine 218 bears the N6-(pyridoxal phosphate)lysine mark.

This sequence belongs to the class-II pyridoxal-phosphate-dependent aminotransferase family. Histidinol-phosphate aminotransferase subfamily. Homodimer. It depends on pyridoxal 5'-phosphate as a cofactor.

The enzyme catalyses L-histidinol phosphate + 2-oxoglutarate = 3-(imidazol-4-yl)-2-oxopropyl phosphate + L-glutamate. It participates in amino-acid biosynthesis; L-histidine biosynthesis; L-histidine from 5-phospho-alpha-D-ribose 1-diphosphate: step 7/9. The polypeptide is Histidinol-phosphate aminotransferase (Xanthomonas oryzae pv. oryzae (strain MAFF 311018)).